A 267-amino-acid polypeptide reads, in one-letter code: MAPSKWDDEEDSSSPPPPPVVARRKFDDEEEEDVLDSWDAAEDSEVEREKAAKAAAAAAKAEAEAAAKKKSKAQRIEEHKQERKKQAEANESDEDSDEDEAARRARLRRTEKEGDLKHAQDLFDDIDLNRNRGAPKAIVISDSADPTQAVDLSAMPLFKPTTKDQFTRLTTTLIPLLTAHSKKPHYALWAQEFTKQLVKELNSGDVKKIASALTTISNEKMREERAADKGNKKTKAAKTKVSLVASRDNKIDATPYDDDGLDDDDFM.

2 disordered regions span residues 1–128 and 220–241; these read MAPS…DIDL and KMRE…KTKV. Residues 28 to 46 are compositionally biased toward acidic residues; that stretch reads DEEEEDVLDSWDAAEDSEV. The stretch at 44-96 forms a coiled coil; that stretch reads SEVEREKAAKAAAAAAKAEAEAAAKKKSKAQRIEEHKQERKKQAEANESDEDS. Positions 74–88 are enriched in basic and acidic residues; it reads QRIEEHKQERKKQAE. A compositionally biased stretch (acidic residues) spans 90–100; it reads NESDEDSDEDE. Basic and acidic residues-rich tracts occupy residues 108–121 and 220–231; these read RRTE…HAQD and KMREERAADKGN.

Belongs to the eIF-3 subunit J family. As to quaternary structure, component of the eukaryotic translation initiation factor 3 (eIF-3) complex.

Its subcellular location is the cytoplasm. Its function is as follows. Component of the eukaryotic translation initiation factor 3 (eIF-3) complex, which is involved in protein synthesis of a specialized repertoire of mRNAs and, together with other initiation factors, stimulates binding of mRNA and methionyl-tRNAi to the 40S ribosome. The eIF-3 complex specifically targets and initiates translation of a subset of mRNAs involved in cell proliferation. The sequence is that of Eukaryotic translation initiation factor 3 subunit J (hcr1) from Neosartorya fischeri (strain ATCC 1020 / DSM 3700 / CBS 544.65 / FGSC A1164 / JCM 1740 / NRRL 181 / WB 181) (Aspergillus fischerianus).